A 680-amino-acid polypeptide reads, in one-letter code: Serine/threonine-protein kinase YPK1 (680 aa).

The segment covering 1–11 (MYSWKSKFKFG) has biased composition (basic residues). The segment at 1–117 (MYSWKSKFKF…GTPNDATSSS (117 aa)) is disordered. 2 stretches are compositionally biased toward basic and acidic residues: residues 12-21 (KSKEEKEAKH) and 41-56 (GEHD…DRKG). T57 carries the post-translational modification Phosphothreonine. Residues 59 to 71 (NPSNSSVVPVRVS) show a composition bias toward low complexity. A phosphoserine mark is found at S61, S64, and S71. Over residues 73 to 83 (DASSSTSTVRD) the composition is skewed to polar residues. A compositionally biased stretch (low complexity) spans 84–97 (SNGGNSENTNSSQN). Positions 98–117 (LDETANIGSTGTPNDATSSS) are enriched in polar residues. At S170 the chain carries Phosphoserine. The Protein kinase domain occupies 347–602 (FDLLKVIGKG…ADEIRNHPFF (256 aa)). ATP-binding positions include 353 to 361 (IGKGSFGKV) and K376. D470 acts as the Proton acceptor in catalysis. Phosphothreonine is present on T502. T504 carries the post-translational modification Phosphothreonine; by PKH1. An AGC-kinase C-terminal domain is found at 603–673 (SQLSWKRLLM…VGNEQLGSSM (71 aa)). A phosphoserine mark is found at S644 and S653. Position 662 is a phosphothreonine; by PKH1 (T662). S671 bears the Phosphoserine mark.

The protein belongs to the protein kinase superfamily. AGC Ser/Thr protein kinase family. RAC subfamily. Autophosphorylated. Phytosphingosine level stimulates phosphorylation by PKH1. The N-terminal half is phosphorylated by FPK1. Phosphorylation is inhibited by exogenous addition of phytosphingosine.

The protein localises to the cytoplasm. Its subcellular location is the cell membrane. It catalyses the reaction L-seryl-[protein] + ATP = O-phospho-L-seryl-[protein] + ADP + H(+). The enzyme catalyses L-threonyl-[protein] + ATP = O-phospho-L-threonyl-[protein] + ADP + H(+). Activated by phytosphingosine (PHS), a sphingoid long chain base. Activated by PKH1 phosphorylation. Its function is as follows. Plays an essential role in the proliferation of yeast cells. Involved in a signaling pathway, required for optimal cell wall integrity, that acts in parallel with the PKC1-SLT2-dependent pathway. Downstream kinase in the sphingolipid-mediated signaling pathway. Phosphorylation is regulated by the intracellular sphingolipid concentration. Disruption or inhibition of sphingolipid synthesis leads to the activation and phosphorylation of YPK1 through the TORC2 and PKH1 pathways, which in turn phosphorylates ORM1 and LAG1 to activate sphingolipid synthesis. Cooperates with SLI1 in mediating resistance to the sphingolipid biosynthesis inhibitor drug myriocin (ISP-1); kinase activity is essential for the resistance. Required for both receptor-mediated and fluid-phase endocytosis, but is not necessary for receptor phosphorylation or ubiquitination. Necessary for the internalization of plasma membrane proteins carrying different types of internalization signals. Acts downstream of the PKH kinases to control endocytosis by phosphorylating components of the endocytic machinery. Phosphorylation of residue Thr-504 in the activation loop and residue Thr-662 are essential for activity. Phosphorylates and down-regulates flippase activator FPK1. The polypeptide is Serine/threonine-protein kinase YPK1 (YPK1) (Saccharomyces cerevisiae (strain ATCC 204508 / S288c) (Baker's yeast)).